The chain runs to 101 residues: CRISPR-associated endoribonuclease Cas2 (101 aa).

Residue Asp-8 participates in Mg(2+) binding.

This sequence belongs to the CRISPR-associated endoribonuclease Cas2 protein family. In terms of assembly, homodimer, forms a heterotetramer with a Cas1 homodimer. Mg(2+) is required as a cofactor.

Its function is as follows. CRISPR (clustered regularly interspaced short palindromic repeat), is an adaptive immune system that provides protection against mobile genetic elements (viruses, transposable elements and conjugative plasmids). CRISPR clusters contain sequences complementary to antecedent mobile elements and target invading nucleic acids. CRISPR clusters are transcribed and processed into CRISPR RNA (crRNA). Functions as a ssRNA-specific endoribonuclease. Involved in the integration of spacer DNA into the CRISPR cassette. This is CRISPR-associated endoribonuclease Cas2 from Treponema denticola (strain ATCC 35405 / DSM 14222 / CIP 103919 / JCM 8153 / KCTC 15104).